Reading from the N-terminus, the 159-residue chain is 2-C-methyl-D-erythritol 2,4-cyclodiphosphate synthase (159 aa).

A divalent metal cation contacts are provided by aspartate 8 and histidine 10. 4-CDP-2-C-methyl-D-erythritol 2-phosphate-binding positions include 8–10 and 34–35; these read DVH and HS. Histidine 42 serves as a coordination point for a divalent metal cation. 4-CDP-2-C-methyl-D-erythritol 2-phosphate is bound by residues 56–58, 61–65, 100–106, 132–135, phenylalanine 139, and arginine 142; these read DIG, FPDTD, AQEPKMA, and TTTE.

Belongs to the IspF family. In terms of assembly, homotrimer. It depends on a divalent metal cation as a cofactor.

The catalysed reaction is 4-CDP-2-C-methyl-D-erythritol 2-phosphate = 2-C-methyl-D-erythritol 2,4-cyclic diphosphate + CMP. The protein operates within isoprenoid biosynthesis; isopentenyl diphosphate biosynthesis via DXP pathway; isopentenyl diphosphate from 1-deoxy-D-xylulose 5-phosphate: step 4/6. In terms of biological role, involved in the biosynthesis of isopentenyl diphosphate (IPP) and dimethylallyl diphosphate (DMAPP), two major building blocks of isoprenoid compounds. Catalyzes the conversion of 4-diphosphocytidyl-2-C-methyl-D-erythritol 2-phosphate (CDP-ME2P) to 2-C-methyl-D-erythritol 2,4-cyclodiphosphate (ME-CPP) with a corresponding release of cytidine 5-monophosphate (CMP). This is 2-C-methyl-D-erythritol 2,4-cyclodiphosphate synthase from Alkaliphilus metalliredigens (strain QYMF).